Consider the following 63-residue polypeptide: Arabinogalactan peptide 3 (63 aa).

Positions 1–26 are cleaved as a signal peptide; sequence MASRILYAAAVVAAVAVSSLAGVAYA. S36 is lipidated: GPI-anchor amidated serine. A propeptide spans 37–63 (removed in mature form); that stretch reads GAAAVSSSLVAAVLCPAVALLLGNLRQ.

This sequence belongs to the AG-peptide AGP family. O-glycosylated on hydroxyprolines; noncontiguous hydroxylproline residues are glycosylated with arabinogalactan. As to expression, expressed in roots, stems, leaves, flowers and seeds.

Its subcellular location is the vacuole. It is found in the aleurone grain membrane. Proteoglycan that seems to be implicated in diverse developmental roles such as differentiation, cell-cell recognition, embryogenesis and programmed cell death. The polypeptide is Arabinogalactan peptide 3 (AGPEP3) (Oryza sativa subsp. japonica (Rice)).